The following is a 91-amino-acid chain: MKPNIHPDNYRTVLFFDSSANEGWLIRSCAGTHGKTMVWTDGKEYLLFSLDTSSSSHPVYTGKQRNVNTEGRASKFNQRFQSVMSSFRKDK.

The protein belongs to the bacterial ribosomal protein bL31 family. Type B subfamily. In terms of assembly, part of the 50S ribosomal subunit.

This chain is Large ribosomal subunit protein bL31B, found in Neisseria gonorrhoeae (strain ATCC 700825 / FA 1090).